We begin with the raw amino-acid sequence, 305 residues long: N-acetylmuramic acid 6-phosphate etherase (305 aa).

One can recognise an SIS domain in the interval 59-222 (TSKALGKGGR…STGVMVKLGK (164 aa)). E87 serves as the catalytic Proton donor. E118 is a catalytic residue.

It belongs to the GCKR-like family. MurNAc-6-P etherase subfamily. Homodimer.

The catalysed reaction is N-acetyl-D-muramate 6-phosphate + H2O = N-acetyl-D-glucosamine 6-phosphate + (R)-lactate. It functions in the pathway amino-sugar metabolism; N-acetylmuramate degradation. Functionally, specifically catalyzes the cleavage of the D-lactyl ether substituent of MurNAc 6-phosphate, producing GlcNAc 6-phosphate and D-lactate. The polypeptide is N-acetylmuramic acid 6-phosphate etherase (Crocosphaera subtropica (strain ATCC 51142 / BH68) (Cyanothece sp. (strain ATCC 51142))).